The primary structure comprises 267 residues: Exosome complex component Rrp42 (267 aa).

Belongs to the RNase PH family. Rrp42 subfamily. In terms of assembly, component of the archaeal exosome complex. Forms a hexameric ring-like arrangement composed of 3 Rrp41-Rrp42 heterodimers. The hexameric ring associates with a trimer of Rrp4 and/or Csl4 subunits.

The protein resides in the cytoplasm. Its function is as follows. Non-catalytic component of the exosome, which is a complex involved in RNA degradation. Contributes to the structuring of the Rrp41 active site. The protein is Exosome complex component Rrp42 of Methanopyrus kandleri (strain AV19 / DSM 6324 / JCM 9639 / NBRC 100938).